The primary structure comprises 376 residues: CCA-adding enzyme (376 aa).

Residues Gly23 and Arg26 each contribute to the ATP site. Residues Gly23 and Arg26 each coordinate CTP. Positions 36 and 38 each coordinate Mg(2+). The ATP site is built by Arg106, Arg152, and Arg155. CTP is bound by residues Arg106, Arg152, and Arg155.

The protein belongs to the tRNA nucleotidyltransferase/poly(A) polymerase family. Bacterial CCA-adding enzyme type 2 subfamily. The cofactor is Mg(2+).

It carries out the reaction a tRNA precursor + 2 CTP + ATP = a tRNA with a 3' CCA end + 3 diphosphate. The catalysed reaction is a tRNA with a 3' CCA end + 2 CTP + ATP = a tRNA with a 3' CCACCA end + 3 diphosphate. In terms of biological role, catalyzes the addition and repair of the essential 3'-terminal CCA sequence in tRNAs without using a nucleic acid template. Adds these three nucleotides in the order of C, C, and A to the tRNA nucleotide-73, using CTP and ATP as substrates and producing inorganic pyrophosphate. tRNA 3'-terminal CCA addition is required both for tRNA processing and repair. Also involved in tRNA surveillance by mediating tandem CCA addition to generate a CCACCA at the 3' terminus of unstable tRNAs. While stable tRNAs receive only 3'-terminal CCA, unstable tRNAs are marked with CCACCA and rapidly degraded. The chain is CCA-adding enzyme from Coxiella burnetii (strain RSA 331 / Henzerling II).